The sequence spans 265 residues: Shikimate dehydrogenase (NADP(+)) (265 aa).

Residues 15 to 17 and Thr-62 each bind shikimate; that span reads SLS. The Proton acceptor role is filled by Lys-66. Positions 87 and 102 each coordinate shikimate. NADP(+)-binding positions include 125-129, 149-154, and Leu-209; these read GAGGA and NRTLEK. Residue Tyr-211 coordinates shikimate. NADP(+) is bound at residue Gly-233.

Belongs to the shikimate dehydrogenase family. As to quaternary structure, homodimer.

The enzyme catalyses shikimate + NADP(+) = 3-dehydroshikimate + NADPH + H(+). The protein operates within metabolic intermediate biosynthesis; chorismate biosynthesis; chorismate from D-erythrose 4-phosphate and phosphoenolpyruvate: step 4/7. Involved in the biosynthesis of the chorismate, which leads to the biosynthesis of aromatic amino acids. Catalyzes the reversible NADPH linked reduction of 3-dehydroshikimate (DHSA) to yield shikimate (SA). The polypeptide is Shikimate dehydrogenase (NADP(+)) (Legionella pneumophila (strain Corby)).